A 433-amino-acid chain; its full sequence is Protein translocase subunit SecD (433 aa).

6 helical membrane passes run 7-27 (LAFL…GPKI), 257-277 (LIAG…AYRM), 278-298 (AGLI…LTFA), 300-320 (LHVV…GIAV), 354-374 (TIVD…IFGG), and 380-400 (GFAV…VLFA).

The protein belongs to the SecD/SecF family. SecD subfamily. In terms of assembly, forms a complex with SecF. Part of the essential Sec protein translocation apparatus which comprises SecA, SecYEG and auxiliary proteins SecDF. Other proteins may also be involved.

The protein localises to the cell membrane. Functionally, part of the Sec protein translocase complex. Interacts with the SecYEG preprotein conducting channel. SecDF uses the proton motive force (PMF) to complete protein translocation after the ATP-dependent function of SecA. This chain is Protein translocase subunit SecD, found in Alicyclobacillus acidocaldarius subsp. acidocaldarius (strain ATCC 27009 / DSM 446 / BCRC 14685 / JCM 5260 / KCTC 1825 / NBRC 15652 / NCIMB 11725 / NRRL B-14509 / 104-IA) (Bacillus acidocaldarius).